Consider the following 123-residue polypeptide: uncharacterized protein (123 aa).

This is an uncharacterized protein from Shigella boydii serotype 4 (strain Sb227).